Here is a 518-residue protein sequence, read N- to C-terminus: Adenine deaminase (518 aa).

Belongs to the metallo-dependent hydrolases superfamily. Adenine deaminase family. Requires Mn(2+) as cofactor.

The enzyme catalyses adenine + H2O + H(+) = hypoxanthine + NH4(+). In Methanoculleus marisnigri (strain ATCC 35101 / DSM 1498 / JR1), this protein is Adenine deaminase.